Here is a 241-residue protein sequence, read N- to C-terminus: Uridylate kinase (241 aa).

ATP is bound at residue 15–18 (KISG). The tract at residues 23 to 28 (GDQGFG) is involved in allosteric activation by GTP. Residue glycine 57 coordinates UMP. ATP contacts are provided by glycine 58 and arginine 62. UMP-binding positions include aspartate 77 and 138–145 (TGNPYFTT). Residues threonine 165, tyrosine 171, and aspartate 174 each coordinate ATP.

The protein belongs to the UMP kinase family. In terms of assembly, homohexamer.

It is found in the cytoplasm. It catalyses the reaction UMP + ATP = UDP + ADP. The protein operates within pyrimidine metabolism; CTP biosynthesis via de novo pathway; UDP from UMP (UMPK route): step 1/1. With respect to regulation, allosterically activated by GTP. Inhibited by UTP. Catalyzes the reversible phosphorylation of UMP to UDP. In Paracoccus zeaxanthinifaciens, this protein is Uridylate kinase.